Consider the following 578-residue polypeptide: MDQKRLFLAIAISLGILLGFQGLYRHFVPEPPAAARTATNAGQGKPNNTLGAVPTDATASQSPPPKEGARLAVDAPRVKGSISLVGARFDDLVLRDYHETVDKNSPLVRLLAPLSGDEPYYVEYGWVPEESGIATPGRDTEWKADAATLTPNKPVTLSWDNGAGLTFMLKVAVDADYMFSVTQSVRNTTGKPVVLHPYARVRRDYRPEVEGYTVLHEGLIGVVDGILHEITYKSADSDGAKNNGLAFEHASTGGWAGITDKYWLTALIPDQITSVDFSFRDTKPNGRDGYQVGIISHNPDQVAAGAESASTTHLFAGAKVVSLLDHYQAEYHIPSFWEAVDFGWFWFITRPFFYALDWLYHLVGNFGVAILIFTVLVKAAFYPLASKSYRSMSKMRLLAPKIQSLRERYKDDPTRMQQEVMQLYKAEGANPASGCLPMLLQFPIFFSLYKVIFVTIEMRHAPFFGWIHDLSAVDPTNLFNLFGLLPFDPTHISPFLHLGIWPLIMGGTMYLQQKMNPPMPDPVQARMFQFMPIIFTFMLARFPVGLVIYWSWNNLLSIGQQWLIQRRTKLPRPELAKV.

The chain crosses the membrane as a helical span at residues 7 to 27 (FLAIAISLGILLGFQGLYRHF). Residues 35 to 70 (ARTATNAGQGKPNNTLGAVPTDATASQSPPPKEGAR) form a disordered region. Residues 37–50 (TATNAGQGKPNNTL) show a composition bias toward polar residues. Helical transmembrane passes span 362-382 (LVGNFGVAILIFTVLVKAAFY), 436-456 (LPMLLQFPIFFSLYKVIFVTI), 491-511 (HISPFLHLGIWPLIMGGTMYL), and 530-550 (FMPIIFTFMLARFPVGLVIYW).

It belongs to the OXA1/ALB3/YidC family. Type 1 subfamily. As to quaternary structure, interacts with the Sec translocase complex via SecD. Specifically interacts with transmembrane segments of nascent integral membrane proteins during membrane integration.

The protein localises to the cell inner membrane. Its function is as follows. Required for the insertion and/or proper folding and/or complex formation of integral membrane proteins into the membrane. Involved in integration of membrane proteins that insert both dependently and independently of the Sec translocase complex, as well as at least some lipoproteins. Aids folding of multispanning membrane proteins. The polypeptide is Membrane protein insertase YidC (Granulibacter bethesdensis (strain ATCC BAA-1260 / CGDNIH1)).